The following is a 98-amino-acid chain: Aspartyl/glutamyl-tRNA(Asn/Gln) amidotransferase subunit C (98 aa).

Residues 75 to 98 (AQALSGAPAQEQQRFKVPQILGED) form a disordered region.

It belongs to the GatC family. Heterotrimer of A, B and C subunits.

It carries out the reaction L-glutamyl-tRNA(Gln) + L-glutamine + ATP + H2O = L-glutaminyl-tRNA(Gln) + L-glutamate + ADP + phosphate + H(+). The enzyme catalyses L-aspartyl-tRNA(Asn) + L-glutamine + ATP + H2O = L-asparaginyl-tRNA(Asn) + L-glutamate + ADP + phosphate + 2 H(+). Allows the formation of correctly charged Asn-tRNA(Asn) or Gln-tRNA(Gln) through the transamidation of misacylated Asp-tRNA(Asn) or Glu-tRNA(Gln) in organisms which lack either or both of asparaginyl-tRNA or glutaminyl-tRNA synthetases. The reaction takes place in the presence of glutamine and ATP through an activated phospho-Asp-tRNA(Asn) or phospho-Glu-tRNA(Gln). The protein is Aspartyl/glutamyl-tRNA(Asn/Gln) amidotransferase subunit C of Streptomyces griseus subsp. griseus (strain JCM 4626 / CBS 651.72 / NBRC 13350 / KCC S-0626 / ISP 5235).